Consider the following 312-residue polypeptide: Zinc transporter ZitB (312 aa).

5 helical membrane passes run 21 to 41, 48 to 68, 90 to 110, 123 to 143, and 164 to 184; these read LLFA…GGIL, LADA…LLAV, AAFV…WEAI, LMMV…WILH, and LLGS…GWTP.

It belongs to the cation diffusion facilitator (CDF) transporter (TC 2.A.4) family. SLC30A subfamily.

Its subcellular location is the cell inner membrane. Its function is as follows. Involved in zinc efflux across the cytoplasmic membrane, thus reducing zinc accumulation in the cytoplasm and rendering bacteria more resistant to zinc. It may contribute to zinc homeostasis at low concentrations of zinc. The protein is Zinc transporter ZitB of Salmonella typhimurium (strain LT2 / SGSC1412 / ATCC 700720).